Reading from the N-terminus, the 291-residue chain is Protease HtpX homolog (291 aa).

2 consecutive transmembrane segments (helical) span residues 11-31 (INTFLILFVFILACGGFGLLA) and 34-54 (FLGMSFFLFILLLAAGYACVQ). A Zn(2+)-binding site is contributed by histidine 140. Residue glutamate 141 is part of the active site. Histidine 144 serves as a coordination point for Zn(2+). Helical transmembrane passes span 155–175 (IVFGLVSAVGLISDMVLRALI) and 186–206 (AFSFAIVLFFSLLAPIAAMLV). Glutamate 215 lines the Zn(2+) pocket.

The protein belongs to the peptidase M48B family. Zn(2+) serves as cofactor.

It is found in the cell membrane. The chain is Protease HtpX homolog from Tropheryma whipplei (strain TW08/27) (Whipple's bacillus).